The chain runs to 191 residues: dCTP deaminase, dUMP-forming (191 aa).

Residues 101–106, D119, 127–129, Q148, Y162, and Q174 each bind dCTP; these read KSSLGR and TLE. E129 (proton donor/acceptor) is an active-site residue. Positions 169–191 are disordered; sequence NRYQGQRGPTASRSHLNFHRTRI. Polar residues predominate over residues 171–183; sequence YQGQRGPTASRSH.

The protein belongs to the dCTP deaminase family. Homotrimer.

It catalyses the reaction dCTP + 2 H2O = dUMP + NH4(+) + diphosphate. It functions in the pathway pyrimidine metabolism; dUMP biosynthesis; dUMP from dCTP: step 1/1. Functionally, bifunctional enzyme that catalyzes both the deamination of dCTP to dUTP and the hydrolysis of dUTP to dUMP without releasing the toxic dUTP intermediate. The polypeptide is dCTP deaminase, dUMP-forming (Pseudarthrobacter chlorophenolicus (strain ATCC 700700 / DSM 12829 / CIP 107037 / JCM 12360 / KCTC 9906 / NCIMB 13794 / A6) (Arthrobacter chlorophenolicus)).